We begin with the raw amino-acid sequence, 89 residues long: Small ribosomal subunit protein uS15 (89 aa).

It belongs to the universal ribosomal protein uS15 family. In terms of assembly, part of the 30S ribosomal subunit. Forms a bridge to the 50S subunit in the 70S ribosome, contacting the 23S rRNA.

One of the primary rRNA binding proteins, it binds directly to 16S rRNA where it helps nucleate assembly of the platform of the 30S subunit by binding and bridging several RNA helices of the 16S rRNA. Functionally, forms an intersubunit bridge (bridge B4) with the 23S rRNA of the 50S subunit in the ribosome. The polypeptide is Small ribosomal subunit protein uS15 (Geobacillus sp. (strain WCH70)).